We begin with the raw amino-acid sequence, 330 residues long: D-xylose-binding periplasmic protein (330 aa).

The signal sequence occupies residues 1 to 23 (MKIKNILLTLCTSLLLTNVAAHA).

It belongs to the bacterial solute-binding protein 2 family.

The protein resides in the periplasm. Functionally, involved in the high-affinity D-xylose membrane transport system. Binds with high affinity to xylose. This Escherichia coli (strain K12) protein is D-xylose-binding periplasmic protein (xylF).